A 1317-amino-acid chain; its full sequence is DNA-directed RNA polymerase subunit beta' (1317 aa).

Zn(2+) contacts are provided by C60, C62, C75, and C78. Residues 183–209 are disordered; the sequence is ELEDEGAKSDVKRKVRDGGEREMRQLR. Mg(2+)-binding residues include D535, D537, and D539. The Zn(2+) site is built by C890, C967, C974, and C977.

This sequence belongs to the RNA polymerase beta' chain family. As to quaternary structure, the RNAP catalytic core consists of 2 alpha, 1 beta, 1 beta' and 1 omega subunit. When a sigma factor is associated with the core the holoenzyme is formed, which can initiate transcription. Mg(2+) is required as a cofactor. The cofactor is Zn(2+).

The catalysed reaction is RNA(n) + a ribonucleoside 5'-triphosphate = RNA(n+1) + diphosphate. DNA-dependent RNA polymerase catalyzes the transcription of DNA into RNA using the four ribonucleoside triphosphates as substrates. This chain is DNA-directed RNA polymerase subunit beta', found in Mycolicibacterium vanbaalenii (strain DSM 7251 / JCM 13017 / BCRC 16820 / KCTC 9966 / NRRL B-24157 / PYR-1) (Mycobacterium vanbaalenii).